Here is a 205-residue protein sequence, read N- to C-terminus: Protein-L-isoaspartate O-methyltransferase (205 aa).

Ser56 is a catalytic residue.

It belongs to the methyltransferase superfamily. L-isoaspartyl/D-aspartyl protein methyltransferase family.

It is found in the cytoplasm. It catalyses the reaction [protein]-L-isoaspartate + S-adenosyl-L-methionine = [protein]-L-isoaspartate alpha-methyl ester + S-adenosyl-L-homocysteine. Catalyzes the methyl esterification of L-isoaspartyl residues in peptides and proteins that result from spontaneous decomposition of normal L-aspartyl and L-asparaginyl residues. It plays a role in the repair and/or degradation of damaged proteins. The protein is Protein-L-isoaspartate O-methyltransferase of Aeromonas salmonicida (strain A449).